The sequence spans 287 residues: 4-hydroxybenzoate octaprenyltransferase (287 aa).

9 helical membrane-spanning segments follow: residues Val-21–Ala-41, Phe-44–Val-64, Val-91–Leu-111, Leu-112–Phe-132, Leu-139–Thr-159, Val-160–Val-180, Leu-211–Leu-231, Tyr-235–Ile-255, and Cys-263–Leu-283.

Belongs to the UbiA prenyltransferase family. It depends on Mg(2+) as a cofactor.

The protein localises to the cell inner membrane. It carries out the reaction all-trans-octaprenyl diphosphate + 4-hydroxybenzoate = 4-hydroxy-3-(all-trans-octaprenyl)benzoate + diphosphate. Its pathway is cofactor biosynthesis; ubiquinone biosynthesis. Its function is as follows. Catalyzes the prenylation of para-hydroxybenzoate (PHB) with an all-trans polyprenyl group. Mediates the second step in the final reaction sequence of ubiquinone-8 (UQ-8) biosynthesis, which is the condensation of the polyisoprenoid side chain with PHB, generating the first membrane-bound Q intermediate 3-octaprenyl-4-hydroxybenzoate. This chain is 4-hydroxybenzoate octaprenyltransferase, found in Coxiella burnetii (strain CbuG_Q212) (Coxiella burnetii (strain Q212)).